Here is a 400-residue protein sequence, read N- to C-terminus: Subtilisin-like protease 2 (400 aa).

A signal peptide spans 1-20; sequence MKFSQSLIALAACFLPLIAA. Positions 21–119 are excised as a propeptide; it reads APEEAQHAKI…IERDGKVQAN (99 aa). The Inhibitor I9 domain occupies 42–117; sequence SYIVVFNKGV…AWIERDGKVQ (76 aa). Asn82 carries an N-linked (GlcNAc...) asparagine glycan. Residues 128-400 enclose the Peptidase S8 domain; sequence TWGLGRISHK…NLIAYNGNGA (273 aa). Catalysis depends on charge relay system residues Asp160, His192, and Ser345.

It belongs to the peptidase S8 family.

Its subcellular location is the secreted. Potently inhibited by the serine peptidase inhibitor chymostatin. Also inhibited by antpain and PMSF. Major secreted subtilisin-like serine endopeptidase. Preferentially cleaves substrates containing hydrophobic residues at P4, positively charged residues at P3, small or flexible residues at P2, and large, bulky residues at P1. Mediates the degradation of collagen, the major structural protein in the mammalian host. Degrades the nonhelical regions of collagen that function in the cross-linking of the helical components. May function as virulence factor involved in epidermal wing necrosis observed in white nose syndrome (WNS) in bats. The polypeptide is Subtilisin-like protease 2 (Pseudogymnoascus destructans (strain ATCC MYA-4855 / 20631-21) (Bat white-nose syndrome fungus)).